Consider the following 238-residue polypeptide: Sugar fermentation stimulation protein homolog (238 aa).

The protein belongs to the SfsA family.

The chain is Sugar fermentation stimulation protein homolog from Brucella abortus (strain S19).